Here is a 275-residue protein sequence, read N- to C-terminus: Calcium-binding protein 4 (275 aa).

The segment covering 1–12 (MTTEQARGQQGP) has biased composition (polar residues). A disordered region spans residues 1–112 (MTTEQARGQQ…SLHDAAQRTY (112 aa)). The span at 38-55 (TRKRSKKERGLRGSRKRT) shows a compositional bias: basic residues. Ser-42 carries the phosphoserine modification. 4 EF-hand domains span residues 129–164 (EELD…LGYM), 183–200 (GRVD…KLRE), 206–241 (LGVR…LLGE), and 243–275 (LAGP…LSRH). Ca(2+) contacts are provided by Asp-142, Asp-144, Asp-146, Tyr-148, and Glu-153. Residues Asp-219, Asp-221, Asp-223, Arg-225, Glu-230, Asp-256, Asn-258, Asp-260, Thr-262, and Glu-267 each contribute to the Ca(2+) site.

In terms of assembly, interacts with CACNA1F and CACNA1D (via IQ domain) in a calcium independent manner. Interacts (via N-terminus) with UNC119. In terms of processing, phosphorylated. Phosphorylation levels change with the light conditions and regulate the activity. As to expression, expressed in retina and in the inner hair cells (IHC) of the cochlea.

It is found in the cytoplasm. Its subcellular location is the presynapse. Functionally, involved in normal synaptic function through regulation of Ca(2+) influx and neurotransmitter release in photoreceptor synaptic terminals and in auditory transmission. Modulator of CACNA1D and CACNA1F, suppressing the calcium-dependent inactivation and shifting the activation range to more hyperpolarized voltages. The polypeptide is Calcium-binding protein 4 (CABP4) (Homo sapiens (Human)).